The chain runs to 59 residues: Small ribosomal subunit protein bS21 (59 aa).

A compositionally biased stretch (basic and acidic residues) spans 32-42 (VRKREHYDKPS). Positions 32–59 (VRKREHYDKPSVKRKKKAEAARRKNAKK) are disordered. Residues 43 to 59 (VKRKKKAEAARRKNAKK) show a composition bias toward basic residues.

The protein belongs to the bacterial ribosomal protein bS21 family.

This Clostridioides difficile (strain 630) (Peptoclostridium difficile) protein is Small ribosomal subunit protein bS21.